A 75-amino-acid chain; its full sequence is Large ribosomal subunit protein bL31 (75 aa).

This sequence belongs to the bacterial ribosomal protein bL31 family. Type A subfamily. Part of the 50S ribosomal subunit.

Binds the 23S rRNA. This is Large ribosomal subunit protein bL31 from Chlorobium luteolum (strain DSM 273 / BCRC 81028 / 2530) (Pelodictyon luteolum).